The primary structure comprises 98 residues: Protein Vpr (98 aa).

Residues methionine 1 to leucine 42 are homooligomerization. Serine 79 and serine 98 each carry phosphoserine; by host.

The protein belongs to the HIV-1 VPR protein family. Homooligomer, may form homodimer. Interacts with p6-gag region of the Pr55 Gag precursor protein through a (Leu-X-X)4 motif near the C-terminus of the P6gag protein. Interacts with host UNG. May interact with host RAD23A/HHR23A. Interacts with host VPRBP/DCAF1, leading to hijack the CUL4A-RBX1-DDB1-DCAF1/VPRBP complex, mediating ubiquitination of host proteins such as TERT and ZGPAT and arrest of the cell cycle in G2 phase. Phosphorylated on several residues by host. These phosphorylations regulate VPR activity for the nuclear import of the HIV-1 pre-integration complex.

Its subcellular location is the virion. The protein localises to the host nucleus. It is found in the host extracellular space. During virus replication, may deplete host UNG protein, and incude G2-M cell cycle arrest. Acts by targeting specific host proteins for degradation by the 26S proteasome, through association with the cellular CUL4A-DDB1 E3 ligase complex by direct interaction with host VPRPB/DCAF-1. Cell cycle arrest reportedly occurs within hours of infection and is not blocked by antiviral agents, suggesting that it is initiated by the VPR carried into the virion. Additionally, VPR induces apoptosis in a cell cycle dependent manner suggesting that these two effects are mechanistically linked. Detected in the serum and cerebrospinal fluid of AIDS patient, VPR may also induce cell death to bystander cells. In terms of biological role, during virus entry, plays a role in the transport of the viral pre-integration (PIC) complex to the host nucleus. This function is crucial for viral infection of non-dividing macrophages. May act directly at the nuclear pore complex, by binding nucleoporins phenylalanine-glycine (FG)-repeat regions. This chain is Protein Vpr, found in Pan troglodytes (Chimpanzee).